The chain runs to 130 residues: Small ribosomal subunit protein uS8 (130 aa).

The protein belongs to the universal ribosomal protein uS8 family. In terms of assembly, part of the 30S ribosomal subunit.

Functionally, one of the primary rRNA binding proteins, it binds directly to 16S rRNA central domain where it helps coordinate assembly of the platform of the 30S subunit. The sequence is that of Small ribosomal subunit protein uS8 from Cenarchaeum symbiosum (strain A).